The primary structure comprises 327 residues: Peroxidase N (327 aa).

Positions 1 to 28 (MKTQTKVMGGHVLLTVFTLCMLCSAVRA) are cleaved as a signal peptide. Position 29 is a pyrrolidone carboxylic acid (glutamine 29). 4 disulfides stabilise this stretch: cysteine 39/cysteine 116, cysteine 72/cysteine 77, cysteine 122/cysteine 323, and cysteine 200/cysteine 232. Catalysis depends on histidine 70, which acts as the Proton acceptor. Ca(2+) contacts are provided by aspartate 71, valine 74, glycine 76, aspartate 78, and serine 80. An N-linked (GlcNAc...) asparagine glycan is attached at asparagine 155. Position 163 (proline 163) interacts with substrate. Asparagine 182 is a glycosylation site (N-linked (GlcNAc...) asparagine). Histidine 193 is a binding site for heme b. Position 194 (threonine 194) interacts with Ca(2+). N-linked (GlcNAc...) asparagine glycosylation is found at asparagine 209 and asparagine 239. Aspartate 245 is a Ca(2+) binding site. Residue asparagine 247 is glycosylated (N-linked (GlcNAc...) asparagine). Ca(2+) is bound by residues serine 248 and aspartate 253. N-linked (GlcNAc...) asparagine glycosylation is present at asparagine 281.

This sequence belongs to the peroxidase family. Classical plant (class III) peroxidase subfamily. It depends on Ca(2+) as a cofactor. The cofactor is heme b.

It localises to the secreted. The enzyme catalyses 2 a phenolic donor + H2O2 = 2 a phenolic radical donor + 2 H2O. Functionally, removal of H(2)O(2), oxidation of toxic reductants, biosynthesis and degradation of lignin, suberization, auxin catabolism, response to environmental stresses such as wounding, pathogen attack and oxidative stress. These functions might be dependent on each isozyme/isoform in each plant tissue. The polypeptide is Peroxidase N (HRPN) (Armoracia rusticana (Horseradish)).